We begin with the raw amino-acid sequence, 423 residues long: MFEKAKEFMPGGVNSPVRAFKSVELDPIFVKSAKGSKIKDINNNEYIDYIQSWGALILGHSHEVVINAINEQSQKGTSYGLCHPLEVEMAQILVENIPSIEMVRMVNSGTEAVMSAIRLARAYTKRDFIVKFEGCYHGHSDSLLVKAGSGALTFGTPNSEGVTKEFVSKTIVAKYNDVQNINEIFENFGDKIACVIVEPIAGNMGVVPPKPNFLLTLRKLTKKYNSILIFDEVITGFRVSQNGAQGLFNVIPDLTTLGKVIGGGLPVGAFGGKKEIMQLISPQGPVYQAGTLSGNPLTLAAGVSTLKFILNNKNFYKKLDELAKTLEEGLLYALKDFNIKVNRVGSMISFFFNGSSVDTYEKVISSDVNMYKKLFKYFLSYGILLPPSPFESLFISYAHTNEDIQQTIDIAMKFSKNLKEGKV.

K259 is modified (N6-(pyridoxal phosphate)lysine).

This sequence belongs to the class-III pyridoxal-phosphate-dependent aminotransferase family. HemL subfamily. As to quaternary structure, homodimer. Pyridoxal 5'-phosphate is required as a cofactor.

The protein resides in the cytoplasm. The enzyme catalyses (S)-4-amino-5-oxopentanoate = 5-aminolevulinate. The protein operates within porphyrin-containing compound metabolism; protoporphyrin-IX biosynthesis; 5-aminolevulinate from L-glutamyl-tRNA(Glu): step 2/2. This chain is Glutamate-1-semialdehyde 2,1-aminomutase, found in Thermosipho melanesiensis (strain DSM 12029 / CIP 104789 / BI429).